Here is a 222-residue protein sequence, read N- to C-terminus: Pyridoxine/pyridoxamine 5'-phosphate oxidase (222 aa).

FMN-binding positions include 69–74 (RMVLLK), 84–85 (YT), K91, and Q113. Residue K74 participates in substrate binding. The substrate site is built by Y131, R135, and S139. FMN contacts are provided by residues 148–149 (QS) and W193. Residue 199 to 201 (RLH) participates in substrate binding. Position 203 (R203) interacts with FMN.

Belongs to the pyridoxamine 5'-phosphate oxidase family. In terms of assembly, homodimer. The cofactor is FMN.

It carries out the reaction pyridoxamine 5'-phosphate + O2 + H2O = pyridoxal 5'-phosphate + H2O2 + NH4(+). The catalysed reaction is pyridoxine 5'-phosphate + O2 = pyridoxal 5'-phosphate + H2O2. The protein operates within cofactor metabolism; pyridoxal 5'-phosphate salvage; pyridoxal 5'-phosphate from pyridoxamine 5'-phosphate: step 1/1. Its pathway is cofactor metabolism; pyridoxal 5'-phosphate salvage; pyridoxal 5'-phosphate from pyridoxine 5'-phosphate: step 1/1. Functionally, catalyzes the oxidation of either pyridoxine 5'-phosphate (PNP) or pyridoxamine 5'-phosphate (PMP) into pyridoxal 5'-phosphate (PLP). This is Pyridoxine/pyridoxamine 5'-phosphate oxidase from Maricaulis maris (strain MCS10) (Caulobacter maris).